A 221-amino-acid chain; its full sequence is Serine/arginine-rich splicing factor 2 (221 aa).

One can recognise an RRM domain in the interval 14–92; it reads TSLKVDNLTY…RELRVQMARY (79 aa). The disordered stretch occupies residues 91-221; that stretch reads RYGRPPDSHH…SPEEEGAVSS (131 aa). 2 stretches are compositionally biased toward basic residues: residues 117–171 and 179–189; these read RRSR…RSKS and SRSRSRSRSRS.

It belongs to the splicing factor SR family. Extensively phosphorylated on serine residues in the RS domain.

It localises to the nucleus. Its function is as follows. Necessary for the splicing of pre-mRNA. It is required for formation of the earliest ATP-dependent splicing complex and interacts with spliceosomal components bound to both the 5'- and 3'-splice sites during spliceosome assembly. It also is required for ATP-dependent interactions of both U1 and U2 snRNPs with pre-mRNA. This is Serine/arginine-rich splicing factor 2 (SRSF2) from Gallus gallus (Chicken).